The primary structure comprises 438 residues: Protein DJ-1 homolog B (438 aa).

The transit peptide at 1-45 (MASSSLCHRYFNKITVTPFFNTKKLHHYSPRRISLRVNRRSFSIS) directs the protein to the chloroplast. PfpI endopeptidase domains are found at residues 53-220 (KKVL…EQLL) and 258-424 (PQIL…EKFY).

Belongs to the peptidase C56 family. As to quaternary structure, homodimer.

The protein resides in the plastid. It is found in the chloroplast. Functionally, may be involved in oxidative stress response. This chain is Protein DJ-1 homolog B (DJ1B), found in Arabidopsis thaliana (Mouse-ear cress).